A 436-amino-acid polypeptide reads, in one-letter code: GTPase Der (436 aa).

2 consecutive EngA-type G domains span residues 4 to 167 and 176 to 351; these read SVVA…PNES and IYFS…ESHT. GTP contacts are provided by residues 10-17, 57-61, 119-122, 182-189, 229-233, and 294-297; these read GRPNVGKS, DTGGI, NKMD, DTAGM, and NKWD. The KH-like domain maps to 352–436; sequence KRIPTNVLND…PIKLFARRRQ (85 aa).

Belongs to the TRAFAC class TrmE-Era-EngA-EngB-Septin-like GTPase superfamily. EngA (Der) GTPase family. In terms of assembly, associates with the 50S ribosomal subunit.

In terms of biological role, GTPase that plays an essential role in the late steps of ribosome biogenesis. In Oceanobacillus iheyensis (strain DSM 14371 / CIP 107618 / JCM 11309 / KCTC 3954 / HTE831), this protein is GTPase Der.